Consider the following 452-residue polypeptide: Packaging protein 1 (452 aa).

The segment at 1–78 (MLPCRSTGRR…AKPPQRGSLL (78 aa)) is disordered. 173 to 180 (GPTGCGKS) is an ATP binding site. The interval 442-452 (RAYHVRKNKYQ) is DNA-binding.

Belongs to the adenoviridae packaging protein 1 family. In terms of assembly, homodimer. Part of a genome packaging complex composed of packaging proteins 1, 2 and 3; this complex specifically binds to the packaging sequence on the left end of viral genomic DNA and performs packaging of the viral genome. Interacts with protein 33K.

It localises to the virion. The protein resides in the host nucleus. It is found in the host nucleoplasm. Its subcellular location is the host nucleolus. Component of the packaging machinery which encapsidates the viral DNA into preformed capsids and transcriptional activator of the viral major late promoter (MLP). Binds, along with packaging proteins 2 and 3, to the specific packaging sequence on the left end of viral genomic DNA and displays ATPase activity thereby providing the power stroke of the packaging machinery. The activity of packaging protein IVa2 is stimulated by protein 33K which acts as a terminase. May be the protein that pumps DNA into the capsid powered by ATP hydrolysis. Specifically binds to the 5'-CG-3' nucleotides of the repeats making up the packaging sequence. Component of the DEF-A and DEF-B transcription factors that bind downstream elements of the major late promoter (MLP), and stimulate transcription from the MLP after initiation of viral DNA replication. DEF-A is a heterodimer packaging proteins 1 and 2 and DEF-B is a homodimer of packaging protein 1. The sequence is that of Packaging protein 1 from Homo sapiens (Human).